A 748-amino-acid polypeptide reads, in one-letter code: Meprin A subunit alpha (748 aa).

The signal sequence occupies residues 1-20; it reads MLWTLPVCLLSLSFSAHIAA. Positions 21-66 are excised as a propeptide; sequence VSIQHLSTGHDHDDVDVGEQQKDISEINSAAGLNLFQGDILLPRTR. One can recognise a Peptidase M12A domain in the interval 67-261; the sequence is NALRDPSSRW…TRLNRMYNCT (195 aa). Over 67-719 the chain is Extracellular; sequence NALRDPSSRW…RCQAMHVHGS (653 aa). 3 cysteine pairs are disulfide-bonded: C108/C260, C129/C148, and C270/C432. N141 carries an N-linked (GlcNAc...) asparagine glycan. H156 provides a ligand contact to Zn(2+). Residue E157 is part of the active site. Zn(2+) is bound by residues H160 and H166. N223, N259, N319, N441, and N542 each carry an N-linked (GlcNAc...) asparagine glycan. An MAM domain is found at 265–434; that stretch reads TLLDHCAFEK…ITLTETPCPT (170 aa). Positions 435–596 constitute an MATH domain; the sequence is GVWTIRNISQ…DDTLIIFVDF (162 aa). The interval 641 to 668 is disordered; it reads LPRRLDQRQPSRPKRSVENTGPMEDHNW. An EGF-like domain is found at 672 to 712; it reads FRDPCDPNPCQNEGTCVNVKGMASCRCVSGHAFFYTGERCQ. 3 disulfide bridges follow: C676-C687, C681-C696, and C698-C711. The chain crosses the membrane as a helical span at residues 720–739; sequence LLGLLIGCITALIFLTFITF. At 740 to 748 the chain is on the cytoplasmic side; that stretch reads SNTYQKLRQ.

Homotetramer consisting of disulfide-linked alpha subunits, homooligomer consisting of disulfide-linked alpha subunit homodimers, or heterotetramer of two alpha and two beta subunits formed by non-covalent association of two disulfide-linked heterodimers. Interacts with MBL2 through its carbohydrate moiety. This interaction may inhibit its catalytic activity. The cofactor is Zn(2+). In terms of processing, N-glycosylated; contains GlcNAc, galactose, mannose and a small amount of fucose. In terms of tissue distribution, colocalized with E-24.11 in proximal tubules of juxtamedullary nephrons.

The protein resides in the membrane. The catalysed reaction is Hydrolysis of protein and peptide substrates preferentially on carboxyl side of hydrophobic residues.. With respect to regulation, inhibited by actinonin. The chain is Meprin A subunit alpha (Mep1a) from Rattus norvegicus (Rat).